Reading from the N-terminus, the 347-residue chain is GTPase Obg (347 aa).

Residues 1–159 (MHFIDQAEIE…VRLRLELKLI (159 aa)) form the Obg domain. One can recognise an OBG-type G domain in the interval 160-328 (AEVGIVGLPN…LLQRVWQCLG (169 aa)). GTP is bound by residues 166–173 (GLPNAGKS), 191–195 (FTTLQ), 213–216 (DIPG), 280–283 (NKID), and 309–311 (SAI). Serine 173 and threonine 193 together coordinate Mg(2+).

This sequence belongs to the TRAFAC class OBG-HflX-like GTPase superfamily. OBG GTPase family. As to quaternary structure, monomer. Mg(2+) is required as a cofactor.

It localises to the cytoplasm. An essential GTPase which binds GTP, GDP and possibly (p)ppGpp with moderate affinity, with high nucleotide exchange rates and a fairly low GTP hydrolysis rate. Plays a role in control of the cell cycle, stress response, ribosome biogenesis and in those bacteria that undergo differentiation, in morphogenesis control. The protein is GTPase Obg of Synechococcus sp. (strain JA-2-3B'a(2-13)) (Cyanobacteria bacterium Yellowstone B-Prime).